A 251-amino-acid polypeptide reads, in one-letter code: uncharacterized protein (251 aa).

The N-terminal stretch at 1–25 (MRKKKFLSRFSFSSLFLLCGTLLSA) is a signal peptide. A lipid anchor (N-palmitoyl cysteine) is attached at Cys-26. Cys-26 carries S-diacylglycerol cysteine lipidation.

It belongs to the MG439/MG440 family.

Its subcellular location is the cell membrane. This is an uncharacterized protein from Mycoplasma pneumoniae (strain ATCC 29342 / M129 / Subtype 1) (Mycoplasmoides pneumoniae).